The following is a 221-amino-acid chain: Iron-sulfur cluster repair protein YtfE (221 aa).

This sequence belongs to the RIC family. YtfE subfamily. Homodimer.

It is found in the cytoplasm. Di-iron-containing protein involved in the repair of iron-sulfur clusters damaged by oxidative and nitrosative stress conditions. The protein is Iron-sulfur cluster repair protein YtfE of Yersinia pseudotuberculosis serotype IB (strain PB1/+).